A 541-amino-acid chain; its full sequence is Chaperonin GroEL 2 (541 aa).

Residues Thr-29 to Pro-32, Asp-86 to Thr-90, Gly-413, and Asp-492 each bind ATP.

It belongs to the chaperonin (HSP60) family. Forms a cylinder of 14 subunits composed of two heptameric rings stacked back-to-back. Interacts with the co-chaperonin GroES.

It is found in the cytoplasm. The catalysed reaction is ATP + H2O + a folded polypeptide = ADP + phosphate + an unfolded polypeptide.. Functionally, together with its co-chaperonin GroES, plays an essential role in assisting protein folding. The GroEL-GroES system forms a nano-cage that allows encapsulation of the non-native substrate proteins and provides a physical environment optimized to promote and accelerate protein folding. This is Chaperonin GroEL 2 from Acidothermus cellulolyticus (strain ATCC 43068 / DSM 8971 / 11B).